The chain runs to 408 residues: Innexin-12 (408 aa).

A helical membrane pass occupies residues 29–49 (TIGLVLASAFITGWSFVGSPI). N99 carries N-linked (GlcNAc...) asparagine glycosylation. 3 helical membrane-spanning segments follow: residues 113–133 (QWVP…VVIW), 197–217 (VITS…FQFV), and 284–304 (IFVA…TNTI).

The protein belongs to the pannexin family.

The protein localises to the cell membrane. It localises to the cell junction. It is found in the gap junction. Structural component of the gap junctions. Plays a role in oocyte directional transit in the spermatheca during ovulation by facilitating the directional propagation of the calcium signal in the spermatheca. Plays a role in male tail tip morphogenesis. This Caenorhabditis elegans protein is Innexin-12.